A 608-amino-acid polypeptide reads, in one-letter code: UvrABC system protein C (608 aa).

The 79-residue stretch at asparagine 16–isoleucine 94 folds into the GIY-YIG domain. One can recognise a UVR domain in the interval asparagine 204–valine 239.

It belongs to the UvrC family. In terms of assembly, interacts with UvrB in an incision complex.

It localises to the cytoplasm. In terms of biological role, the UvrABC repair system catalyzes the recognition and processing of DNA lesions. UvrC both incises the 5' and 3' sides of the lesion. The N-terminal half is responsible for the 3' incision and the C-terminal half is responsible for the 5' incision. The polypeptide is UvrABC system protein C (Pseudomonas paraeruginosa (strain DSM 24068 / PA7) (Pseudomonas aeruginosa (strain PA7))).